The chain runs to 142 residues: Galactose-6-phosphate isomerase subunit LacA (142 aa).

Belongs to the LacAB/RpiB family. As to quaternary structure, heteromultimeric protein consisting of LacA and LacB.

The catalysed reaction is aldehydo-D-galactose 6-phosphate = keto-D-tagatose 6-phosphate. The protein operates within carbohydrate metabolism; D-galactose 6-phosphate degradation; D-tagatose 6-phosphate from D-galactose 6-phosphate: step 1/1. This chain is Galactose-6-phosphate isomerase subunit LacA, found in Staphylococcus aureus (strain JH9).